Reading from the N-terminus, the 402-residue chain is Flagellar hook protein FlgE (402 aa).

The protein belongs to the flagella basal body rod proteins family.

The protein localises to the bacterial flagellum basal body. The chain is Flagellar hook protein FlgE (flgE) from Escherichia coli (strain K12).